Reading from the N-terminus, the 370-residue chain is CST complex subunit STN1 (370 aa).

The interval 1-187 (MESNSSQCED…KVYDQPFHSP (187 aa)) is interaction with CTC1. The segment at residues 57–157 (VDILGTVIGV…EIHATTYYKV (101 aa)) is a DNA-binding region (OB). 2 winged helix-turn-helix (wHTH) regions span residues 193–297 (EALS…YVTR) and 298–370 (EDKE…YTAF).

Belongs to the STN1 family. Component of the CST complex, composed of TEN1/C17orf106, CTC1/C17orf68 and STN1; in the complex interacts directly with TEN1 and CTC1. Interacts with ACD/TPP1, POT1 and POLA1.

The protein localises to the nucleus. It is found in the chromosome. The protein resides in the telomere. Its function is as follows. Component of the CST complex proposed to act as a specialized replication factor promoting DNA replication under conditions of replication stress or natural replication barriers such as the telomere duplex. The CST complex binds single-stranded DNA with high affinity in a sequence-independent manner, while isolated subunits bind DNA with low affinity by themselves. Initially the CST complex has been proposed to protect telomeres from DNA degradation. However, the CST complex has been shown to be involved in several aspects of telomere replication. The CST complex inhibits telomerase and is involved in telomere length homeostasis; it is proposed to bind to newly telomerase-synthesized 3' overhangs and to terminate telomerase action implicating the association with the ACD:POT1 complex thus interfering with its telomerase stimulation activity. The CST complex is also proposed to be involved in fill-in synthesis of the telomeric C-strand probably implicating recruitment and activation of DNA polymerase alpha. The CST complex facilitates recovery from many forms of exogenous DNA damage; seems to be involved in the re-initiation of DNA replication at repaired forks and/or dormant origins. Required for efficicient replication of the duplex region of the telomere. Promotes efficient replication of lagging-strand telomeres. Promotes general replication start following replication-fork stalling implicating new origin firing. May be in involved in C-strand fill-in during late S/G2 phase independent of its role in telomere duplex replication. The polypeptide is CST complex subunit STN1 (Bos taurus (Bovine)).